We begin with the raw amino-acid sequence, 278 residues long: Myb/SANT-like DNA-binding domain-containing protein 1 (278 aa).

One can recognise a Myb-like domain in the interval 44–131 (RNWTDAEMRG…WPYYLAIDRI (88 aa)). The disordered stretch occupies residues 139 to 167 (CEGKLPDGQQPGPSTSQTEASLSPSAKST). Positions 149–166 (PGPSTSQTEASLSPSAKS) are enriched in polar residues.

The polypeptide is Myb/SANT-like DNA-binding domain-containing protein 1 (Msantd1) (Mus musculus (Mouse)).